The sequence spans 141 residues: Nucleoside diphosphate kinase (141 aa).

Lys-11, Phe-59, Arg-87, Thr-93, Arg-104, and Asn-114 together coordinate ATP. The active-site Pros-phosphohistidine intermediate is the His-117.

It belongs to the NDK family. Homotetramer. The cofactor is Mg(2+).

The protein resides in the cytoplasm. It carries out the reaction a 2'-deoxyribonucleoside 5'-diphosphate + ATP = a 2'-deoxyribonucleoside 5'-triphosphate + ADP. The catalysed reaction is a ribonucleoside 5'-diphosphate + ATP = a ribonucleoside 5'-triphosphate + ADP. In terms of biological role, major role in the synthesis of nucleoside triphosphates other than ATP. The ATP gamma phosphate is transferred to the NDP beta phosphate via a ping-pong mechanism, using a phosphorylated active-site intermediate. This is Nucleoside diphosphate kinase from Xylella fastidiosa (strain M23).